A 417-amino-acid polypeptide reads, in one-letter code: Riboflavin biosynthesis protein RibBA (417 aa).

The tract at residues 1-204 (MTRLDSIERA…IADLIEWRRK (204 aa)) is DHBP synthase. Residues 28 to 29 (RE), D33, 141 to 145 (RPGHT), and E165 each bind D-ribulose 5-phosphate. A Mg(2+)-binding site is contributed by E29. Residue H144 coordinates Mg(2+). The GTP cyclohydrolase II stretch occupies residues 205–417 (HEKHVQRIAE…LDDHPEADGA (213 aa)). 259–263 (RVHSE) is a binding site for GTP. C264, C275, and C277 together coordinate Zn(2+). GTP-binding positions include Q280, 303–305 (EGR), and T325. The Proton acceptor; for GTP cyclohydrolase activity role is filled by D337. Residue R339 is the Nucleophile; for GTP cyclohydrolase activity of the active site. Residues T360 and K365 each contribute to the GTP site.

This sequence in the N-terminal section; belongs to the DHBP synthase family. It in the C-terminal section; belongs to the GTP cyclohydrolase II family. Mg(2+) serves as cofactor. It depends on Mn(2+) as a cofactor. Requires Zn(2+) as cofactor.

It catalyses the reaction D-ribulose 5-phosphate = (2S)-2-hydroxy-3-oxobutyl phosphate + formate + H(+). It carries out the reaction GTP + 4 H2O = 2,5-diamino-6-hydroxy-4-(5-phosphoribosylamino)-pyrimidine + formate + 2 phosphate + 3 H(+). The protein operates within cofactor biosynthesis; riboflavin biosynthesis; 2-hydroxy-3-oxobutyl phosphate from D-ribulose 5-phosphate: step 1/1. It functions in the pathway cofactor biosynthesis; riboflavin biosynthesis; 5-amino-6-(D-ribitylamino)uracil from GTP: step 1/4. Catalyzes the conversion of D-ribulose 5-phosphate to formate and 3,4-dihydroxy-2-butanone 4-phosphate. Its function is as follows. Catalyzes the conversion of GTP to 2,5-diamino-6-ribosylamino-4(3H)-pyrimidinone 5'-phosphate (DARP), formate and pyrophosphate. The chain is Riboflavin biosynthesis protein RibBA from Mycobacteroides abscessus (strain ATCC 19977 / DSM 44196 / CCUG 20993 / CIP 104536 / JCM 13569 / NCTC 13031 / TMC 1543 / L948) (Mycobacterium abscessus).